The chain runs to 152 residues: Large ribosomal subunit protein bL9 (152 aa).

It belongs to the bacterial ribosomal protein bL9 family.

Functionally, binds to the 23S rRNA. This is Large ribosomal subunit protein bL9 from Synechococcus sp. (strain CC9605).